Consider the following 185-residue polypeptide: Peptidyl-tRNA hydrolase (185 aa).

Residue Tyr14 coordinates tRNA. His19 acts as the Proton acceptor in catalysis. Positions 65, 67, and 113 each coordinate tRNA.

This sequence belongs to the PTH family. In terms of assembly, monomer.

It is found in the cytoplasm. The enzyme catalyses an N-acyl-L-alpha-aminoacyl-tRNA + H2O = an N-acyl-L-amino acid + a tRNA + H(+). Its function is as follows. Hydrolyzes ribosome-free peptidyl-tRNAs (with 1 or more amino acids incorporated), which drop off the ribosome during protein synthesis, or as a result of ribosome stalling. Catalyzes the release of premature peptidyl moieties from peptidyl-tRNA molecules trapped in stalled 50S ribosomal subunits, and thus maintains levels of free tRNAs and 50S ribosomes. In Rickettsia conorii (strain ATCC VR-613 / Malish 7), this protein is Peptidyl-tRNA hydrolase.